The primary structure comprises 458 residues: Fumarate hydratase class II 2 (458 aa).

Substrate contacts are provided by residues 98-100, 123-126, 133-135, and T181; these read SGT, NPND, and SSN. The active-site Proton donor/acceptor is the H182. The active site involves S312. Residues S313 and 318-320 contribute to the substrate site; that span reads KVN.

The protein belongs to the class-II fumarase/aspartase family. Fumarase subfamily. Homotetramer.

It localises to the cytoplasm. It carries out the reaction (S)-malate = fumarate + H2O. The protein operates within carbohydrate metabolism; tricarboxylic acid cycle; (S)-malate from fumarate: step 1/1. In terms of biological role, involved in the TCA cycle. Catalyzes the stereospecific interconversion of fumarate to L-malate. This Pseudomonas aeruginosa (strain ATCC 15692 / DSM 22644 / CIP 104116 / JCM 14847 / LMG 12228 / 1C / PRS 101 / PAO1) protein is Fumarate hydratase class II 2.